A 905-amino-acid chain; its full sequence is Coatomer subunit beta' (905 aa).

WD repeat units follow at residues 13–52 (ARSD…LVKT), 55–94 (VCDL…RVHM), 97–136 (AHSD…SCSQ), 140–180 (GHTH…PNFT), 183–224 (GHEK…CVQT), 227–266 (GHAQ…LEST), 350–388 (SCEI…NKSF), and 390–425 (SAQE…KSFK). The residue at position 627 (Lys-627) is an N6-acetyllysine. The stretch at 746–783 (IRTGRLPEAAFLARTYLPSQVSRVVKLWRENLSKVNQK) is one WD 9 repeat. The segment at 837 to 873 (EEAKGFQPSRPTAQQEPDGKPASSPVIMASQTTHKEE) is disordered. Residue Ser-859 is modified to Phosphoserine. Residues 867 to 891 (QTTHKEEKSLLELEVDLDNLELEDI) are a coiled coil.

The protein belongs to the WD repeat COPB2 family. In terms of assembly, oligomeric complex that consists of at least the alpha, beta, beta', gamma, delta, epsilon and zeta subunits. Probably interacts with PEX11A. Interacts with SCYL1. Interacts with JAGN1.

The protein localises to the cytoplasm. Its subcellular location is the cytosol. The protein resides in the golgi apparatus membrane. It localises to the cytoplasmic vesicle. It is found in the COPI-coated vesicle membrane. Its function is as follows. The coatomer is a cytosolic protein complex that binds to dilysine motifs and reversibly associates with Golgi non-clathrin-coated vesicles, which further mediate biosynthetic protein transport from the ER, via the Golgi up to the trans Golgi network. Coatomer complex is required for budding from Golgi membranes, and is essential for the retrograde Golgi-to-ER transport of dilysine-tagged proteins. In mammals, the coatomer can only be recruited by membranes associated to ADP-ribosylation factors (ARFs), which are small GTP-binding proteins; the complex also influences the Golgi structural integrity, as well as the processing, activity, and endocytic recycling of LDL receptors. This coatomer complex protein, essential for Golgi budding and vesicular trafficking, is a selective binding protein (RACK) for protein kinase C, epsilon type. It binds to Golgi membranes in a GTP-dependent manner. This is Coatomer subunit beta' (Copb2) from Mus musculus (Mouse).